A 70-amino-acid polypeptide reads, in one-letter code: Small ribosomal subunit protein bS21B (70 aa).

It belongs to the bacterial ribosomal protein bS21 family.

The chain is Small ribosomal subunit protein bS21B from Rhizobium etli (strain ATCC 51251 / DSM 11541 / JCM 21823 / NBRC 15573 / CFN 42).